The chain runs to 335 residues: Acyl-CoA Delta(11) desaturase (335 aa).

3 helical membrane passes run 39–59, 64–84, and 98–118; these read LLTF…CFTS, TIIL…AGAH, and LQII…IHWI. Residues 84–89 carry the Histidine box-1 motif; sequence HRLWAH. The Histidine box-2 motif lies at 121–125; it reads HRMHH. A run of 2 helical transmembrane segments spans residues 182–202 and 213–235; these read AIPF…MYFW and TMLR…HLYG. The short motif at 261–265 is the Histidine box-3 element; it reads HNYHH. Residues 312-335 form a disordered region; sequence MKRTGDGTDVSGQKYSCESSEVLQ. Polar residues predominate over residues 321–335; sequence VSGQKYSCESSEVLQ.

This sequence belongs to the fatty acid desaturase type 1 family. Fe cation is required as a cofactor. Detected in pheromone gland.

The protein resides in the membrane. It catalyses the reaction an 11,12-saturated fatty acyl-CoA + 2 Fe(II)-[cytochrome b5] + O2 + 2 H(+) = an (11Z)-Delta(11)-fatty acyl-CoA + 2 Fe(III)-[cytochrome b5] + 2 H2O. Functionally, catalyzes the formation of Delta(11) fatty acyl precursors in the pheromone gland, with a preference for myristic acid. The polypeptide is Acyl-CoA Delta(11) desaturase (Choristoneura rosaceana (Oblique banded leafroller)).